Here is a 47-residue protein sequence, read N- to C-terminus: MSNPRGNPKYFNPNHLGTQPRAAGGNKGKKMQDQSGQHAQVIQTKGE.

The segment at 1 to 47 is disordered; the sequence is MSNPRGNPKYFNPNHLGTQPRAAGGNKGKKMQDQSGQHAQVIQTKGE. The span at 33–47 shows a compositional bias: polar residues; sequence DQSGQHAQVIQTKGE.

This sequence belongs to the SspN family.

The protein localises to the spore core. This is Small, acid-soluble spore protein N from Geobacillus sp. (strain WCH70).